The chain runs to 401 residues: ATP-dependent RNA helicase eIF4A (401 aa).

A Q motif motif is present at residues 28 to 56 (DNFDDMKLKGELLRGIYAYGFERPSAIQQ). The region spanning 59 to 229 (IMPIVTGRDC…KKFMRDPIRI (171 aa)) is the Helicase ATP-binding domain. 72 to 79 (AQSGTGKT) is an ATP binding site. The DEAD box signature appears at 177 to 180 (DEAD). A Helicase C-terminal domain is found at 240–401 (GIRQFYINVE…EMPLNVADLI (162 aa)).

This sequence belongs to the DEAD box helicase family. eIF4A subfamily. Component of the eIF4F complex, which composition varies with external and internal environmental conditions. It is composed of at least eIF4A, eIF4E and eIF4G.

Its subcellular location is the cytoplasm. It catalyses the reaction ATP + H2O = ADP + phosphate + H(+). Functionally, ATP-dependent RNA helicase which is a subunit of the eIF4F complex involved in cap recognition and is required for mRNA binding to ribosome. In the current model of translation initiation, eIF4A unwinds RNA secondary structures in the 5'-UTR of mRNAs which is necessary to allow efficient binding of the small ribosomal subunit, and subsequent scanning for the initiator codon. The protein is ATP-dependent RNA helicase eIF4A (TIF1) of Cryptococcus neoformans var. neoformans serotype D (strain B-3501A) (Filobasidiella neoformans).